We begin with the raw amino-acid sequence, 421 residues long: Zinc finger protein Pegasus (421 aa).

Residues 35–55 form a disordered region; that stretch reads GDKEAETLQGAGTEGDQNGLD. 3 consecutive C2H2-type zinc fingers follow at residues 82-104, 110-132, and 138-161; these read LKCR…IRIH, HRCH…MRSH, and YKCE…RRKH. Over residues 229-238 the composition is skewed to polar residues; the sequence is SMTKSSQTSG. Disordered stretches follow at residues 229–249 and 292–358; these read SMTK…LMVD and QPAT…PTLP. The segment covering 292–313 has biased composition (low complexity); that stretch reads QPATPAVVSSVSASIAQSSSPT. A compositionally biased stretch (polar residues) spans 339 to 351; it reads HTSTPSISNSQPS. 2 consecutive C2H2-type zinc fingers follow at residues 366–388 and 394–418; these read HHCQ…MGCH and FQCN…RGQH.

Belongs to the Ikaros C2H2-type zinc-finger protein family. In terms of assembly, probably self-associates.

It is found in the nucleus. Functionally, transcriptional repressor that binds the core 5'GNNTGTNG-3' DNA consensus sequence. The chain is Zinc finger protein Pegasus (IKZF5) from Gallus gallus (Chicken).